The following is a 165-amino-acid chain: MKKIAVYPGSFDPITNGHLDIIKRGLSMFDELIVLIAYNAAKSSLFTVQERIEMIQEALHDRKGVRVDSYDGLLVDYVRKEGGNVILRGLRAMSEFEYEFQLALMNRRLNRNIETVFLMTGYKWFYTSSTIIKEASRLGGSPKGLVPEVVFRKMQEKYPLMNKGK.

S10 provides a ligand contact to substrate. Residues 10–11 (SF) and H18 each bind ATP. K42, L74, and R88 together coordinate substrate. ATP is bound by residues 89–91 (GLR), E99, and 124–130 (WFYTSST).

It belongs to the bacterial CoaD family. In terms of assembly, homohexamer. Requires Mg(2+) as cofactor.

It localises to the cytoplasm. It catalyses the reaction (R)-4'-phosphopantetheine + ATP + H(+) = 3'-dephospho-CoA + diphosphate. Its pathway is cofactor biosynthesis; coenzyme A biosynthesis; CoA from (R)-pantothenate: step 4/5. In terms of biological role, reversibly transfers an adenylyl group from ATP to 4'-phosphopantetheine, yielding dephospho-CoA (dPCoA) and pyrophosphate. This chain is Phosphopantetheine adenylyltransferase, found in Syntrophus aciditrophicus (strain SB).